The chain runs to 466 residues: 3-isopropylmalate dehydratase large subunit (466 aa).

Cysteine 347, cysteine 407, and cysteine 410 together coordinate [4Fe-4S] cluster.

Belongs to the aconitase/IPM isomerase family. LeuC type 1 subfamily. As to quaternary structure, heterodimer of LeuC and LeuD. It depends on [4Fe-4S] cluster as a cofactor.

The catalysed reaction is (2R,3S)-3-isopropylmalate = (2S)-2-isopropylmalate. Its pathway is amino-acid biosynthesis; L-leucine biosynthesis; L-leucine from 3-methyl-2-oxobutanoate: step 2/4. In terms of biological role, catalyzes the isomerization between 2-isopropylmalate and 3-isopropylmalate, via the formation of 2-isopropylmaleate. This chain is 3-isopropylmalate dehydratase large subunit, found in Cronobacter sakazakii (strain ATCC BAA-894) (Enterobacter sakazakii).